Here is a 338-residue protein sequence, read N- to C-terminus: Glyceraldehyde-3-phosphate dehydrogenase 2 (338 aa).

Residues 12-13 (RI), aspartate 34, and arginine 79 each bind NAD(+). D-glyceraldehyde 3-phosphate contacts are provided by residues 150 to 152 (SCT), threonine 181, 210 to 211 (TG), and arginine 233. Residue cysteine 151 is the Nucleophile of the active site. Position 315 (asparagine 315) interacts with NAD(+).

The protein belongs to the glyceraldehyde-3-phosphate dehydrogenase family. Homotetramer.

It localises to the cytoplasm. It catalyses the reaction D-glyceraldehyde 3-phosphate + phosphate + NAD(+) = (2R)-3-phospho-glyceroyl phosphate + NADH + H(+). It functions in the pathway carbohydrate degradation; glycolysis; pyruvate from D-glyceraldehyde 3-phosphate: step 1/5. This is Glyceraldehyde-3-phosphate dehydrogenase 2 (GPD2) from Mucor circinelloides f. lusitanicus (Mucor racemosus var. lusitanicus).